The following is an 81-amino-acid chain: Sec-independent protein translocase protein TatA (81 aa).

The helical transmembrane segment at 1 to 21 (MGGLQPWHWVIVIAVFVLLFG) threads the bilayer. Residues 46-56 (MQAESKGDEPK) show a composition bias toward basic and acidic residues. The disordered stretch occupies residues 46–81 (MQAESKGDEPKPATPIASERVDTTAPEQQSTDRHTA).

This sequence belongs to the TatA/E family. In terms of assembly, the Tat system comprises two distinct complexes: a TatABC complex, containing multiple copies of TatA, TatB and TatC subunits, and a separate TatA complex, containing only TatA subunits. Substrates initially bind to the TatABC complex, which probably triggers association of the separate TatA complex to form the active translocon.

The protein localises to the cell membrane. In terms of biological role, part of the twin-arginine translocation (Tat) system that transports large folded proteins containing a characteristic twin-arginine motif in their signal peptide across membranes. TatA could form the protein-conducting channel of the Tat system. This chain is Sec-independent protein translocase protein TatA, found in Mycolicibacterium smegmatis (strain ATCC 700084 / mc(2)155) (Mycobacterium smegmatis).